The chain runs to 990 residues: Chondroitin sulfate ABC exolyase (990 aa).

His-453 (proton acceptor) is an active-site residue. The active-site Proton donor is the Tyr-460.

It belongs to the polysaccharide lyase 8 family.

It catalyses the reaction Exolytic removal of Delta(4)-unsaturated disaccharide residues from the non-reducing ends of both polymeric chondroitin/dermatan sulfates and their oligosaccharide fragments.. Its activity is regulated as follows. Inhibited by Zn(2+), whereas Ni(2+), Fe(2+), and Cu(2+) have little or no effect on activity. Its function is as follows. Broad-specificity glycosaminoglycan lyase, which acts in an exolytic fashion, and preferentially degrades the tetra- and hexasaccharide derivatives of chondroitin sulfate and dermatan sulfate produced by the chondroitin sulfate ABC endolyase, to yield the respective disaccharides. To a lesser extent, is also able to split off disaccharide residues directly from polymeric chondroitin 4- and 6-sulfate, dermatan sulfate, chondroitin, and hyaluronan. Is not active against keratan sulfate, heparan sulfate, and heparin. The protein is Chondroitin sulfate ABC exolyase (ChABCII) of Proteus vulgaris.